A 346-amino-acid polypeptide reads, in one-letter code: Dihydroorotate dehydrogenase (quinone) (346 aa).

Residues 62–66 (AGMDK) and Thr-86 contribute to the FMN site. Lys-66 contributes to the substrate binding site. Residue 111 to 115 (NRMGF) participates in substrate binding. The FMN site is built by Asn-142 and Asn-175. Position 175 (Asn-175) interacts with substrate. The Nucleophile role is filled by Ser-178. Asn-180 lines the substrate pocket. FMN-binding residues include Lys-211 and Val-239. Position 240–241 (240–241 (NT)) interacts with substrate. FMN is bound by residues Gly-261, Gly-289, and 310 to 311 (YT).

It belongs to the dihydroorotate dehydrogenase family. Type 2 subfamily. In terms of assembly, monomer. The cofactor is FMN.

It is found in the cell membrane. The catalysed reaction is (S)-dihydroorotate + a quinone = orotate + a quinol. The protein operates within pyrimidine metabolism; UMP biosynthesis via de novo pathway; orotate from (S)-dihydroorotate (quinone route): step 1/1. Its function is as follows. Catalyzes the conversion of dihydroorotate to orotate with quinone as electron acceptor. This chain is Dihydroorotate dehydrogenase (quinone), found in Thermus thermophilus (strain ATCC BAA-163 / DSM 7039 / HB27).